The primary structure comprises 366 residues: 3-beta-hydroxysteroid dehydrogenase (366 aa).

Tyrosine 154 functions as the Proton donor in the catalytic mechanism.

This sequence belongs to the 3-beta-HSD family.

It carries out the reaction testosterone + NAD(+) = androst-4-ene-3,17-dione + NADH + H(+). It catalyses the reaction testosterone + NADP(+) = androst-4-ene-3,17-dione + NADPH + H(+). Catalyzes the degradation of testosterone into androstenedione. The chain is 3-beta-hydroxysteroid dehydrogenase from Mycolicibacterium neoaurum (Mycobacterium neoaurum).